The following is a 184-amino-acid chain: Myosin regulatory light chain 1 (184 aa).

Residues 1-29 (MFSSKENSLGAKRAPFSSNTTSSQRVAAQ) form a disordered region. The residue at position 36 (Ser36) is a Phosphoserine. EF-hand domains lie at 45–80 (SQIQ…LNQD) and 114–149 (SPRN…MGDR). Residues Asp58, Asp60, Asp62, Asn64, and Asp69 each contribute to the Ca(2+) site.

Binds to myosin II chains myo2 and myo3.

The protein resides in the cytoplasm. This chain is Myosin regulatory light chain 1 (rlc1), found in Schizosaccharomyces pombe (strain 972 / ATCC 24843) (Fission yeast).